Reading from the N-terminus, the 225-residue chain is Uracil-DNA glycosylase (225 aa).

Asp-65 acts as the Proton acceptor in catalysis.

Belongs to the uracil-DNA glycosylase (UDG) superfamily. UNG family.

It is found in the cytoplasm. The catalysed reaction is Hydrolyzes single-stranded DNA or mismatched double-stranded DNA and polynucleotides, releasing free uracil.. Its function is as follows. Excises uracil residues from the DNA which can arise as a result of misincorporation of dUMP residues by DNA polymerase or due to deamination of cytosine. In Bacillus thuringiensis (strain Al Hakam), this protein is Uracil-DNA glycosylase.